The sequence spans 557 residues: UvrABC system protein C (557 aa).

The GIY-YIG domain maps to 14–89 (EEPGVYIFKN…IKKYRPKYNV (76 aa)). A UVR domain is found at 194–229 (EEVFDYLKEKMETHSKMLDFENAAKYRDLLLNLSNV).

The protein belongs to the UvrC family. Interacts with UvrB in an incision complex.

The protein localises to the cytoplasm. In terms of biological role, the UvrABC repair system catalyzes the recognition and processing of DNA lesions. UvrC both incises the 5' and 3' sides of the lesion. The N-terminal half is responsible for the 3' incision and the C-terminal half is responsible for the 5' incision. This Thermotoga maritima (strain ATCC 43589 / DSM 3109 / JCM 10099 / NBRC 100826 / MSB8) protein is UvrABC system protein C.